The sequence spans 35 residues: AIFTIRNNXQQTVXAGAVPVGGGQXLDXGQTXTLD.

It belongs to the thaumatin family.

The polypeptide is Thaumatin-like protein 6 (Glebionis coronaria (Crown daisy)).